The following is a 207-amino-acid chain: Large ribosomal subunit protein uL4 (207 aa).

The segment at 47–78 is disordered; it reads GTAKTKTRAEVRGGGKKPWRQKGTGRARQGSI. The segment covering 60 to 71 has biased composition (basic residues); the sequence is GGKKPWRQKGTG.

Belongs to the universal ribosomal protein uL4 family. In terms of assembly, part of the 50S ribosomal subunit.

One of the primary rRNA binding proteins, this protein initially binds near the 5'-end of the 23S rRNA. It is important during the early stages of 50S assembly. It makes multiple contacts with different domains of the 23S rRNA in the assembled 50S subunit and ribosome. In terms of biological role, forms part of the polypeptide exit tunnel. This chain is Large ribosomal subunit protein uL4, found in Acholeplasma laidlawii (strain PG-8A).